A 484-amino-acid chain; its full sequence is Glutamate--tRNA ligase (484 aa).

Positions Pro-11–Asn-21 match the 'HIGH' region motif. A 'KMSKS' region motif is present at residues Lys-252–Arg-256. Lys-255 serves as a coordination point for ATP.

The protein belongs to the class-I aminoacyl-tRNA synthetase family. Glutamate--tRNA ligase type 1 subfamily. As to quaternary structure, monomer.

It localises to the cytoplasm. It carries out the reaction tRNA(Glu) + L-glutamate + ATP = L-glutamyl-tRNA(Glu) + AMP + diphosphate. Its function is as follows. Catalyzes the attachment of glutamate to tRNA(Glu) in a two-step reaction: glutamate is first activated by ATP to form Glu-AMP and then transferred to the acceptor end of tRNA(Glu). The chain is Glutamate--tRNA ligase from Staphylococcus saprophyticus subsp. saprophyticus (strain ATCC 15305 / DSM 20229 / NCIMB 8711 / NCTC 7292 / S-41).